Here is a 101-residue protein sequence, read N- to C-terminus: Small ribosomal subunit protein uS14 (101 aa).

The protein belongs to the universal ribosomal protein uS14 family. In terms of assembly, part of the 30S ribosomal subunit. Contacts proteins S3 and S10.

Functionally, binds 16S rRNA, required for the assembly of 30S particles and may also be responsible for determining the conformation of the 16S rRNA at the A site. The protein is Small ribosomal subunit protein uS14 of Ehrlichia canis (strain Jake).